We begin with the raw amino-acid sequence, 213 residues long: Large ribosomal subunit protein uL3 (213 aa).

Belongs to the universal ribosomal protein uL3 family. Part of the 50S ribosomal subunit. Forms a cluster with proteins L14 and L19.

Its function is as follows. One of the primary rRNA binding proteins, it binds directly near the 3'-end of the 23S rRNA, where it nucleates assembly of the 50S subunit. This is Large ribosomal subunit protein uL3 from Bifidobacterium longum subsp. infantis (strain ATCC 15697 / DSM 20088 / JCM 1222 / NCTC 11817 / S12).